The following is a 264-amino-acid chain: Glutamate racemase (264 aa).

Substrate is bound by residues 12–13 and 44–45; these read DS and YG. The Proton donor/acceptor role is filled by C75. 76 to 77 contributes to the substrate binding site; it reads NT. Residue C186 is the Proton donor/acceptor of the active site. Residue 187–188 coordinates substrate; the sequence is TH.

Belongs to the aspartate/glutamate racemases family.

It catalyses the reaction L-glutamate = D-glutamate. It participates in cell wall biogenesis; peptidoglycan biosynthesis. Its function is as follows. Provides the (R)-glutamate required for cell wall biosynthesis. The chain is Glutamate racemase from Stutzerimonas stutzeri (strain A1501) (Pseudomonas stutzeri).